Consider the following 114-residue polypeptide: MSNQVLCCVVLCLLGANTVDGGITQSPKYLFRKEGQNVTLSCEQNLNHDAMYWYRQDPGQGLRLIYYSQIVNDFQKGDIAEGYSVSREKKESFPLTVTSAQKNPTAFYLCASSI.

Residues 1-21 (MSNQVLCCVVLCLLGANTVDG) form the signal peptide. The region spanning 22–114 (GITQSPKYLF…TAFYLCASSI (93 aa)) is the Ig-like domain. The N-linked (GlcNAc...) asparagine glycan is linked to asparagine 37. Cysteines 42 and 110 form a disulfide.

Alpha-beta TR is a heterodimer composed of an alpha and beta chain; disulfide-linked. The alpha-beta TR is associated with the transmembrane signaling CD3 coreceptor proteins to form the TR-CD3 (TcR or TCR). The assembly of alpha-beta TR heterodimers with CD3 occurs in the endoplasmic reticulum where a single alpha-beta TR heterodimer associates with one CD3D-CD3E heterodimer, one CD3G-CD3E heterodimer and one CD247 homodimer forming a stable octameric structure. CD3D-CD3E and CD3G-CD3E heterodimers preferentially associate with TR alpha and TR beta chains, respectively. The association of the CD247 homodimer is the last step of TcR assembly in the endoplasmic reticulum and is required for transport to the cell surface. As to quaternary structure, (Microbial infection) Interacts with Staphylococcus aureus enterotoxin type B/SEB.

The protein resides in the cell membrane. V region of the variable domain of T cell receptor (TR) beta chain that participates in the antigen recognition. Alpha-beta T cell receptors are antigen specific receptors which are essential to the immune response and are present on the cell surface of T lymphocytes. Recognize peptide-major histocompatibility (MH) (pMH) complexes that are displayed by antigen presenting cells (APC), a prerequisite for efficient T cell adaptive immunity against pathogens. Binding of alpha-beta TR to pMH complex initiates TR-CD3 clustering on the cell surface and intracellular activation of LCK that phosphorylates the ITAM motifs of CD3G, CD3D, CD3E and CD247 enabling the recruitment of ZAP70. In turn ZAP70 phosphorylates LAT, which recruits numerous signaling molecules to form the LAT signalosome. The LAT signalosome propagates signal branching to three major signaling pathways, the calcium, the mitogen-activated protein kinase (MAPK) kinase and the nuclear factor NF-kappa-B (NF-kB) pathways, leading to the mobilization of transcription factors that are critical for gene expression and essential for T cell growth and differentiation. The T cell repertoire is generated in the thymus, by V-(D)-J rearrangement. This repertoire is then shaped by intrathymic selection events to generate a peripheral T cell pool of self-MH restricted, non-autoaggressive T cells. Post-thymic interaction of alpha-beta TR with the pMH complexes shapes TR structural and functional avidity. The sequence is that of T cell receptor beta variable 19 from Homo sapiens (Human).